We begin with the raw amino-acid sequence, 429 residues long: Probable proton-coupled zinc antiporter SLC30A4 (429 aa).

Residues Met-1–Arg-113 are Cytoplasmic-facing. Residues Leu-114 to Ile-134 traverse the membrane as a helical segment. Over Ala-135 to Asp-143 the chain is Lumenal. A helical membrane pass occupies residues Ala-144–Ser-164. Zn(2+) contacts are provided by His-146 and Asp-150. The Cytoplasmic portion of the chain corresponds to Ser-165–Arg-178. A helical membrane pass occupies residues Leu-179 to Leu-199. The Lumenal portion of the chain corresponds to Tyr-200–Asp-216. Residues Ile-217–Asn-237 traverse the membrane as a helical segment. Residues Gln-238–Ala-274 are Cytoplasmic-facing. The interval Gly-240–Gln-264 is zinc binding. A helical transmembrane segment spans residues Phe-275–Ile-295. His-277 and Asp-281 together coordinate Zn(2+). Residues Arg-296–Tyr-310 lie on the Lumenal side of the membrane. The chain crosses the membrane as a helical span at residues Val-311–Ile-331. At Leu-332–Ser-429 the chain is on the cytoplasmic side.

Belongs to the cation diffusion facilitator (CDF) transporter (TC 2.A.4) family. SLC30A subfamily. As to quaternary structure, homodimerization could regulate efficiency for zinc transport. Interacts with TMEM163.

The protein resides in the endosome membrane. Its subcellular location is the late endosome membrane. The protein localises to the lysosome membrane. The enzyme catalyses Zn(2+)(in) + 2 H(+)(out) = Zn(2+)(out) + 2 H(+)(in). In terms of biological role, probable proton-coupled zinc ion antiporter mediating zinc import from cytoplasm potentially into the endocytic compartment. Controls zinc deposition in milk. This is Probable proton-coupled zinc antiporter SLC30A4 from Bos taurus (Bovine).